Here is a 358-residue protein sequence, read N- to C-terminus: Probable RNA methyltransferase MXAN_6459 (358 aa).

The active-site Proton acceptor is the E92. Residues 99–327 (FDEKYVICVS…PVARRYSGGK (229 aa)) form the Radical SAM core domain. The cysteines at positions 106 and 333 are disulfide-linked. [4Fe-4S] cluster is bound by residues C113, C117, and C120. S-adenosyl-L-methionine is bound by residues 160–161 (GE), S192, 215–217 (SVT), and D289. C333 acts as the S-methylcysteine intermediate in catalysis.

It belongs to the radical SAM superfamily. RlmN family. Requires [4Fe-4S] cluster as cofactor.

Its subcellular location is the cytoplasm. This Myxococcus xanthus (strain DK1622) protein is Probable RNA methyltransferase MXAN_6459.